A 162-amino-acid polypeptide reads, in one-letter code: Large ribosomal subunit protein uL15 (162 aa).

Basic and acidic residues predominate over residues 1–18; the sequence is MKLNEIRDNEGATKDRMR. Residues 1–42 are disordered; sequence MKLNEIRDNEGATKDRMRVGRGIGSGKGKTAGRGVKGQKART. A compositionally biased stretch (gly residues) spans 21-35; the sequence is RGIGSGKGKTAGRGV.

This sequence belongs to the universal ribosomal protein uL15 family. In terms of assembly, part of the 50S ribosomal subunit.

Functionally, binds to the 23S rRNA. The polypeptide is Large ribosomal subunit protein uL15 (Methylobacterium sp. (strain 4-46)).